A 517-amino-acid chain; its full sequence is C-22 sterol desaturase ERG5 (517 aa).

Residues 21-41 (LAVAKATGSPITTLFTIIFLI) traverse the membrane as a helical segment. Cys458 is a heme binding site.

Belongs to the cytochrome P450 family. Heme is required as a cofactor.

Its subcellular location is the endoplasmic reticulum membrane. The enzyme catalyses 5-dehydroepisterol + NADPH + O2 + H(+) = ergosta-5,7,22,24(28)-tetraen-3beta-ol + NADP(+) + 2 H2O. The protein operates within steroid metabolism; ergosterol biosynthesis; ergosterol from zymosterol: step 4/5. In terms of biological role, C-22 sterol desaturase; part of the third module of ergosterol biosynthesis pathway that includes the late steps of the pathway. ERG5 converts 5-dehydroepisterol into ergosta-5,7,22,24(28)-tetraen-3beta-ol by forming the C-22(23) double bond in the sterol side chain. The third module or late pathway involves the ergosterol synthesis itself through consecutive reactions that mainly occur in the endoplasmic reticulum (ER) membrane. Firstly, the squalene synthase ERG9 catalyzes the condensation of 2 farnesyl pyrophosphate moieties to form squalene, which is the precursor of all steroids. Squalene synthase is crucial for balancing the incorporation of farnesyl diphosphate (FPP) into sterol and nonsterol isoprene synthesis. Secondly, the squalene epoxidase ERG1 catalyzes the stereospecific oxidation of squalene to (S)-2,3-epoxysqualene, which is considered to be a rate-limiting enzyme in steroid biosynthesis. Then, the lanosterol synthase ERG7 catalyzes the cyclization of (S)-2,3 oxidosqualene to lanosterol, a reaction that forms the sterol core. In the next steps, lanosterol is transformed to zymosterol through a complex process involving various demethylation, reduction and desaturation reactions. The lanosterol 14-alpha-demethylase ERG11 (also known as CYP51) catalyzes C14-demethylation of lanosterol to produce 4,4'-dimethyl cholesta-8,14,24-triene-3-beta-ol, which is critical for ergosterol biosynthesis. The C-14 reductase ERG24 reduces the C14=C15 double bond of 4,4-dimethyl-cholesta-8,14,24-trienol to produce 4,4-dimethyl-cholesta-8,24-dienol. 4,4-dimethyl-cholesta-8,24-dienol is substrate of the C-4 demethylation complex ERG25-ERG26-ERG27 in which ERG25 catalyzes the three-step monooxygenation required for the demethylation of 4,4-dimethyl and 4alpha-methylsterols, ERG26 catalyzes the oxidative decarboxylation that results in a reduction of the 3-beta-hydroxy group at the C-3 carbon to an oxo group, and ERG27 is responsible for the reduction of the keto group on the C-3. ERG28 has a role as a scaffold to help anchor ERG25, ERG26 and ERG27 to the endoplasmic reticulum and ERG29 regulates the activity of the iron-containing C4-methylsterol oxidase ERG25. Then, the sterol 24-C-methyltransferase ERG6 catalyzes the methyl transfer from S-adenosyl-methionine to the C-24 of zymosterol to form fecosterol. The C-8 sterol isomerase ERG2 catalyzes the reaction which results in unsaturation at C-7 in the B ring of sterols and thus converts fecosterol to episterol. The sterol-C5-desaturase ERG3 then catalyzes the introduction of a C-5 double bond in the B ring to produce 5-dehydroepisterol. The C-22 sterol desaturase ERG5 further converts 5-dehydroepisterol into ergosta-5,7,22,24(28)-tetraen-3beta-ol by forming the C-22(23) double bond in the sterol side chain. Finally, ergosta-5,7,22,24(28)-tetraen-3beta-ol is substrate of the C-24(28) sterol reductase ERG4 to produce ergosterol. In Candida albicans (strain SC5314 / ATCC MYA-2876) (Yeast), this protein is C-22 sterol desaturase ERG5.